The chain runs to 644 residues: uncharacterized protein (644 aa).

Residues 16–38 (LLSYLGVVGVGIAGLCIYRSVWG) traverse the membrane as a helical segment. The span at 586-603 (VRQLQKEAGEGEAEEHPR) shows a compositional bias: basic and acidic residues. Positions 586–613 (VRQLQKEAGEGEAEEHPRARPAAGKAQR) are disordered.

The protein resides in the membrane. This is an uncharacterized protein from Treponema pallidum (strain Nichols).